The primary structure comprises 696 residues: L-amino-acid oxidase (696 aa).

Positions 1–130 are excised as a propeptide; the sequence is MKWSAAAGAA…IKMRRDLKAR (130 aa). Residues E207, R215, 236 to 237, and V440 contribute to the FAD site; that span reads MR. Residue R237 participates in substrate binding. Substrate is bound at residue Y564. FAD-binding positions include E649 and 658 to 661; that span reads IASA.

It belongs to the flavin monoamine oxidase family. The cofactor is FAD.

It carries out the reaction an L-alpha-amino acid + O2 + H2O = a 2-oxocarboxylate + H2O2 + NH4(+). This is L-amino-acid oxidase (lox) from Neurospora crassa (strain ATCC 24698 / 74-OR23-1A / CBS 708.71 / DSM 1257 / FGSC 987).